A 210-amino-acid polypeptide reads, in one-letter code: Mitochondrial cardiolipin hydrolase (210 aa).

Over 1-5 the chain is Mitochondrial intermembrane; sequence MLLWG. Residues 6–24 traverse the membrane as a helical segment; the sequence is RWKLAAGLAGLALSLELFY. Residues 25-210 are Cytoplasmic-facing; sequence RYMRRRKPLR…YNFFPEKENK (186 aa). The region spanning 138–165 is the PLD phosphodiesterase domain; sequence SSGYMHHKFAVVDGTVVLTGSLNWTVQA. Residues His143, Lys145, and Asp150 contribute to the active site.

The protein belongs to the phospholipase D family. MitoPLD/Zucchini subfamily. Homodimer.

Its subcellular location is the mitochondrion outer membrane. The catalysed reaction is a cardiolipin + H2O = a 1,2-diacyl-sn-glycero-3-phospho-(1'-sn-glycerol) + a 1,2-diacyl-sn-glycero-3-phosphate + H(+). Presents phospholipase and nuclease activities, depending on the different physiological conditions. Plays a key role in mitochondrial fusion and fission via its phospholipase activity. In its phospholipase role, it uses the mitochondrial lipid cardiolipin as substrate to generate phosphatidate (PA or 1,2-diacyl-sn-glycero-3-phosphate), a second messenger signaling lipid. Production of PA facilitates Mitofusin-mediated fusion, whereas the cleavage of PA by the Lipin family of phosphatases produces diacylgycerol (DAG) which promotes mitochondrial fission. Regulates mitochondrial shape through facilitating mitochondrial fusion. During spermatogenesis, plays a critical role in PIWI-interacting RNA (piRNA) biogenesis. piRNAs provide essential protection against the activity of mobile genetic elements. piRNA-mediated transposon silencing is thus critical for maintaining genome stability, in particular in germline cells when transposons are mobilized as a consequence of wide-spread genomic demethylation. Has been shown to be a backbone-non-specific, single strand-specific nuclease, cleaving either RNA or DNA substrates with similar affinity. Produces 5' phosphate and 3' hydroxyl termini, suggesting it could directly participate in the processing of primary piRNA transcripts. Has been proposed to act as a cardiolipin hydrolase to generate phosphatidic acid at mitochondrial surface. Although it cannot be excluded that it can act as a phospholipase in some circumstances, this activity could not be confirmed. The chain is Mitochondrial cardiolipin hydrolase (pld6) from Xenopus laevis (African clawed frog).